The chain runs to 367 residues: Bi-functional coumaroyl CoA and feruloyl CoA ortho-hydroxylase Diox4 (367 aa).

A Fe2OG dioxygenase domain is found at 207 to 317 (IREPMLVGSR…RISVPLFVNP (111 aa)). Tyr223 is a 2-oxoglutarate binding site. Fe cation is bound by residues His238, Asp240, and His298. Residues Arg308 and Ser310 each coordinate 2-oxoglutarate.

Belongs to the iron/ascorbate-dependent oxidoreductase family. L-ascorbate serves as cofactor. Fe(2+) is required as a cofactor.

The catalysed reaction is (E)-4-coumaroyl-CoA + 2-oxoglutarate + O2 = (E)-2,4-dihydroxycinnamoyl-CoA + succinate + CO2. The enzyme catalyses (E)-feruloyl-CoA + 2-oxoglutarate + O2 = (E)-6-hydroxyferuloyl-CoA + succinate + CO2. Its pathway is phenylpropanoid metabolism. Its activity is regulated as follows. Repressed by the competitive inhibitor psoralen, but not by umbelliferone, xanthotoxin, bergapten and isopimpinellin. In terms of biological role, 2-oxoglutarate (OG)- and Fe(II)-dependent dioxygenase (2OGD) involved in scopoletin and umbelliferone biosynthesis. Converts feruloyl CoA into 6'-hydroxyferuloyl CoA, and p-coumaroyl CoA into 2,4-dihydroxycinnamoyl-CoA. Has no activity with cinnamic acid, caffeic acid, p-coumaric acid, ferulic acid, cinnamoyl-CoA and caffeoyl-CoA. This is Bi-functional coumaroyl CoA and feruloyl CoA ortho-hydroxylase Diox4 from Ruta graveolens (Common rue).